The chain runs to 306 residues: Putative dihydroorotate dehydrogenase A (fumarate) (306 aa).

FMN-binding positions include S20 and 44–45; that span reads KG. Residues K44 and 68–72 contribute to the substrate site; that span reads NSIGL. Residues N98 and N126 each coordinate FMN. Substrate is bound at residue N126. The active-site Nucleophile is the C129. K164 and I190 together coordinate FMN. 191 to 192 provides a ligand contact to substrate; sequence NT. FMN is bound by residues G216, 244-245, and 266-267; these read GG and GT.

The protein belongs to the dihydroorotate dehydrogenase family. Type 1 subfamily. In terms of assembly, homodimer. FMN serves as cofactor.

The protein localises to the cytoplasm. It carries out the reaction (S)-dihydroorotate + fumarate = orotate + succinate. It functions in the pathway pyrimidine metabolism; UMP biosynthesis via de novo pathway. Its function is as follows. Catalyzes the conversion of dihydroorotate to orotate with fumarate as the electron acceptor. The polypeptide is Putative dihydroorotate dehydrogenase A (fumarate) (pyrD) (Aquifex aeolicus (strain VF5)).